Here is a 409-residue protein sequence, read N- to C-terminus: Argininosuccinate synthase (409 aa).

ATP-binding positions include 11-19 (AYSGGLDTS) and alanine 38. 2 residues coordinate L-citrulline: tyrosine 91 and serine 96. Glycine 121 lines the ATP pocket. L-aspartate is bound by residues threonine 123, asparagine 127, and aspartate 128. Asparagine 127 is an L-citrulline binding site. 5 residues coordinate L-citrulline: arginine 131, serine 182, serine 191, glutamate 267, and tyrosine 279.

It belongs to the argininosuccinate synthase family. Type 1 subfamily. In terms of assembly, homotetramer.

The protein localises to the cytoplasm. The enzyme catalyses L-citrulline + L-aspartate + ATP = 2-(N(omega)-L-arginino)succinate + AMP + diphosphate + H(+). Its pathway is amino-acid biosynthesis; L-arginine biosynthesis; L-arginine from L-ornithine and carbamoyl phosphate: step 2/3. This is Argininosuccinate synthase from Nitrobacter winogradskyi (strain ATCC 25391 / DSM 10237 / CIP 104748 / NCIMB 11846 / Nb-255).